The chain runs to 428 residues: Histidinol dehydrogenase (428 aa).

3 residues coordinate substrate: Ser-232, Gln-254, and His-257. Residues Gln-254 and His-257 each contribute to the Zn(2+) site. Active-site proton acceptor residues include Glu-324 and His-325. Substrate is bound by residues His-325, Asp-358, Glu-412, and His-417. Residue Asp-358 coordinates Zn(2+). Zn(2+) is bound at residue His-417.

The protein belongs to the histidinol dehydrogenase family. It depends on Zn(2+) as a cofactor.

The enzyme catalyses L-histidinol + 2 NAD(+) + H2O = L-histidine + 2 NADH + 3 H(+). The protein operates within amino-acid biosynthesis; L-histidine biosynthesis; L-histidine from 5-phospho-alpha-D-ribose 1-diphosphate: step 9/9. In terms of biological role, catalyzes the sequential NAD-dependent oxidations of L-histidinol to L-histidinaldehyde and then to L-histidine. The sequence is that of Histidinol dehydrogenase from Thermotoga maritima (strain ATCC 43589 / DSM 3109 / JCM 10099 / NBRC 100826 / MSB8).